The following is a 157-amino-acid chain: Probable succinate transporter subunit YjjB (157 aa).

The next 4 helical transmembrane spans lie at 8–28, 50–70, 87–107, and 129–149; these read FALA…AMVF, MILM…SMLV, VFTV…TAMI, and FLTA…PGLW.

This sequence belongs to the ThrE exporter (TC 2.A.79) family. The transporter is composed of YjjB and YjjP.

The protein resides in the cell inner membrane. Involved in succinate export with YjjP. Both proteins are required for export. This Escherichia coli (strain ATCC 8739 / DSM 1576 / NBRC 3972 / NCIMB 8545 / WDCM 00012 / Crooks) protein is Probable succinate transporter subunit YjjB.